A 575-amino-acid chain; its full sequence is Estrogen receptor beta (575 aa).

The tract at residues 1-160 (MSSSLSPTLQ…GAVVKRDMHF (160 aa)) is modulating. The disordered stretch occupies residues 108–151 (DTKPHTSGRHSSFLSRPKLFGKRPEDGDGDEALDDDDPSSSSSG). Over residues 134 to 145 (GDGDEALDDDDP) the composition is skewed to acidic residues. 2 NR C4-type zinc fingers span residues 161-181 (CVVC…CEGC) and 197-221 (CPAT…LRKC). Residues 161–226 (CVVCHDYASG…RLRKCYEMGM (66 aa)) constitute a DNA-binding region (nuclear receptor). Residues 290–526 (SPEQLVYCIL…DLLLEMLDAN (237 aa)) form the NR LBD domain. Over residues 537–549 (VCTDPVTPATSPN) the composition is skewed to polar residues. The segment at 537 to 557 (VCTDPVTPATSPNTPLPPQLH) is disordered.

It belongs to the nuclear hormone receptor family. NR3 subfamily. Binds DNA as a homodimer. Can form a heterodimer with ER-alpha. As to expression, ovary and testis.

It is found in the nucleus. In terms of biological role, binds estrogens with an affinity similar to that of ER-alpha, and activates expression of reporter genes containing estrogen response elements (ERE) in an estrogen-dependent manner. This chain is Estrogen receptor beta (esr2), found in Ictalurus punctatus (Channel catfish).